The sequence spans 256 residues: Large ribosomal subunit protein bL28m (256 aa).

Residues 1–55 (MPLHKVPVGLWKRLRLREGIYSRLPAHYLRSLEEARTPTPVHFRPHGAKFKINPK) constitute a mitochondrion transit peptide.

Belongs to the bacterial ribosomal protein bL28 family. In terms of assembly, component of the mitochondrial ribosome large subunit (39S) which comprises a 16S rRNA and about 50 distinct proteins. Interacts with OXA1L.

The protein localises to the mitochondrion. This chain is Large ribosomal subunit protein bL28m (MRPL28), found in Bos taurus (Bovine).